The following is a 241-amino-acid chain: MORN repeat-containing protein 3 (241 aa).

The tract at residues 6-35 (CPQKSEPLWKEWDQKAQKNGLRHQVFAVNG) is interaction with MDM2. MORN repeat units follow at residues 38–60 (YVGE…KNGA), 62–84 (YEGD…DQET), 91–113 (YSGW…PKEY), 114–136 (YEGD…NGDI), 137–159 (YEGQ…NGNR), 160–182 (YEGN…DHGQ), and 184–205 (FEGF…GRDE). Residues 76–100 (TLSLPDQETGKYKRAYSGWWKGDKK) are interaction with SIRT1. Residues 206-240 (APQPTQFPIPEVKILDPDGVLEEALAMFKKTKEEG) form an interaction with TP53 region.

As to quaternary structure, interacts with MEIG1. Interacts with TP53, MDM2 and SIRT1; the interactions mediate post-transcriptional modifications of TP53 by MDM2 and SIRT1.

The protein resides in the cytoplasmic vesicle. It localises to the secretory vesicle. The protein localises to the acrosome. Its function is as follows. Assembles a suppression complex (suppresome) by tethering SIRT1 and MDM2 to regulate composite modifications of p53/TP53. Confers both deacetylation-mediated functional inactivation, by SIRT1, and ubiquitination-dependent degradation, by MDM2, of p53/TP53, promoting a proliferative and cell survival behaviors. May play a role in the regulation of spermatogenesis. The sequence is that of MORN repeat-containing protein 3 (MORN3) from Bos taurus (Bovine).